The sequence spans 498 residues: Zinc finger protein 682 (498 aa).

Residues 4–75 form the KRAB domain; sequence LTFRDVTIEF…KRHETIAKPP (72 aa). 10 C2H2-type zinc fingers span residues 173–195, 201–223, 229–251, 257–279, 285–307, 313–335, 341–363, 369–391, 397–419, and 425–447; these read FKCM…KIIH, CICE…KRIH, YKCE…KRIH, YKCE…KKIH, YTCE…KTIH, YKCK…ERTH, YKCE…KVIH, and YNCE…KKIH. The C2H2-type 11; degenerate zinc finger occupies 453 to 475; that stretch reads YKCEECGKAFKRCSHLNEHKRVQ.

The protein belongs to the krueppel C2H2-type zinc-finger protein family.

The protein localises to the nucleus. Its function is as follows. May be involved in transcriptional regulation. The chain is Zinc finger protein 682 (ZNF682) from Homo sapiens (Human).